Consider the following 185-residue polypeptide: MTKDVISGMSSHMDKTIDSLRKEYQKVRTGRASTSLLDEIKVDFYGTLSPLNQVATLAVPEPRTITLQPWDAKMIPPIEKAIMNANLGLTPANDGKLIRLNLPPLTEERRKEIVKQLKKFAEDAKVAVRNIRREAIDDLKKLEKEKKISEDDLKRAEKDVQDVTNSHVARIDEVLLHKEKEVMEV.

This sequence belongs to the RRF family.

The protein localises to the cytoplasm. Its function is as follows. Responsible for the release of ribosomes from messenger RNA at the termination of protein biosynthesis. May increase the efficiency of translation by recycling ribosomes from one round of translation to another. The sequence is that of Ribosome-recycling factor from Geotalea daltonii (strain DSM 22248 / JCM 15807 / FRC-32) (Geobacter daltonii).